A 620-amino-acid chain; its full sequence is Chaperone protein HscA homolog (620 aa).

Belongs to the heat shock protein 70 family.

In terms of biological role, chaperone involved in the maturation of iron-sulfur cluster-containing proteins. Has a low intrinsic ATPase activity which is markedly stimulated by HscB. In Shewanella putrefaciens (strain CN-32 / ATCC BAA-453), this protein is Chaperone protein HscA homolog.